The chain runs to 175 residues: NADH-ubiquinone oxidoreductase chain 6 (175 aa).

The next 5 membrane-spanning stretches (helical) occupy residues 1-21, 27-47, 49-69, 88-108, and 149-169; these read MMTYFVFILSTVFVIGFVGFS, VYGGVGLIISGGVGCGIVMNF, GSFLGLMVFLIYLGGMMVVFG, VVLGAFVSGLFMEMLLVLYVL, and YGVWLVVVTGWSLFIAVVVIM.

It belongs to the complex I subunit 6 family. In terms of assembly, core subunit of respiratory chain NADH dehydrogenase (Complex I) which is composed of 45 different subunits.

It is found in the mitochondrion inner membrane. The catalysed reaction is a ubiquinone + NADH + 5 H(+)(in) = a ubiquinol + NAD(+) + 4 H(+)(out). Core subunit of the mitochondrial membrane respiratory chain NADH dehydrogenase (Complex I) which catalyzes electron transfer from NADH through the respiratory chain, using ubiquinone as an electron acceptor. Essential for the catalytic activity and assembly of complex I. The sequence is that of NADH-ubiquinone oxidoreductase chain 6 (MT-ND6) from Pteropus dasymallus (Ryukyu flying fox).